We begin with the raw amino-acid sequence, 244 residues long: Orotidine 5'-phosphate decarboxylase (244 aa).

Residues Asp20, Lys42, 70 to 79 (DLKFFDIPAT), Thr125, Arg186, Gln195, Gly215, and Arg216 each bind substrate. The active-site Proton donor is the Lys72.

It belongs to the OMP decarboxylase family. Type 1 subfamily. As to quaternary structure, homodimer.

The enzyme catalyses orotidine 5'-phosphate + H(+) = UMP + CO2. Its pathway is pyrimidine metabolism; UMP biosynthesis via de novo pathway; UMP from orotate: step 2/2. Catalyzes the decarboxylation of orotidine 5'-monophosphate (OMP) to uridine 5'-monophosphate (UMP). The chain is Orotidine 5'-phosphate decarboxylase from Xylella fastidiosa (strain M23).